The primary structure comprises 134 residues: Z-ring associated protein G (134 aa).

The chain crosses the membrane as a helical span at residues 7-27 (EIWVAIGIAFIVGLFIGYIIV). The segment at 107–134 (ATDKSQNEQPRDYSEGASGLFKENKEEN) is disordered. The span at 111–120 (SQNEQPRDYS) shows a compositional bias: basic and acidic residues.

Belongs to the ZapG family.

Its subcellular location is the cell inner membrane. Its function is as follows. Involved in cell division, cell envelope biogenesis and cell shape maintenance. In Haemophilus influenzae (strain ATCC 51907 / DSM 11121 / KW20 / Rd), this protein is Z-ring associated protein G.